Consider the following 292-residue polypeptide: 4-hydroxy-tetrahydrodipicolinate synthase (292 aa).

Residue Thr-45 participates in pyruvate binding. Residue Tyr-133 is the Proton donor/acceptor of the active site. Lys-161 (schiff-base intermediate with substrate) is an active-site residue. Position 203 (Ile-203) interacts with pyruvate.

This sequence belongs to the DapA family. As to quaternary structure, homotetramer; dimer of dimers.

The protein resides in the cytoplasm. It catalyses the reaction L-aspartate 4-semialdehyde + pyruvate = (2S,4S)-4-hydroxy-2,3,4,5-tetrahydrodipicolinate + H2O + H(+). The protein operates within amino-acid biosynthesis; L-lysine biosynthesis via DAP pathway; (S)-tetrahydrodipicolinate from L-aspartate: step 3/4. Functionally, catalyzes the condensation of (S)-aspartate-beta-semialdehyde [(S)-ASA] and pyruvate to 4-hydroxy-tetrahydrodipicolinate (HTPA). The sequence is that of 4-hydroxy-tetrahydrodipicolinate synthase from Vibrio vulnificus (strain CMCP6).